The following is a 225-amino-acid chain: Transmembrane protein 40 (225 aa).

Met1 bears the N-acetylmethionine mark. Positions 1–14 (MEASGSSSQSQDSG) are enriched in low complexity. The interval 1-96 (MEASGSSSQS…RRDSLRGADH (96 aa)) is disordered. Over residues 15 to 29 (GVHRETEDHYQETEL) the composition is skewed to basic and acidic residues. Basic residues predominate over residues 30–39 (HKHHGKARER). Low complexity predominate over residues 46 to 68 (SSSSSSSSSSSSSSSSSSSSSSD). Over residues 78-87 (GPRKHRRRPR) the composition is skewed to basic residues. Ser129 is subject to Phosphoserine. 2 helical membrane passes run 152–172 (FFHF…YHYY) and 179–199 (LGVG…FGLV).

It is found in the membrane. The sequence is that of Transmembrane protein 40 (Tmem40) from Mus musculus (Mouse).